The following is a 950-amino-acid chain: MLSKLLRVGEGRMVKRLKKVADYVESLSGDVEKLTDAELRAKTDEFKKRHAEGESLDELLPEAFAVAREAAWRVLGQRPFEVQLMGAAALHLGNVAEMKTGEGKTLTSVLPAYLNGIGGKGVHIVTVNDYLAKRDSEWMGRVHRFLGLDVGVILAQMTPEERRVAYNADITYGTNNEFGFDYLRDNMAHTLDDCVQRGHNFVIVDEVDSILIDEARTPLIISGPADGSSNWYTEFARLAPLMEKDTHYEVDLRKRTVGVHELGVEFVEDQLGIDNLYEAANSPLVSYLNNALKAKELFNRDKDYIVRNGEVLIVDEFTGRVLIGRRYSEGMHQAIEAKEHVEIKAENQTLATITLQNYFRLYNKHAGMTGTAQTEAAELHEIYKLGVVPIPTNRPMVREDQSDLIYKTEEAKYIAVVDDVAERYEKGQPVLIGTTSVERSEYLSRQFTKRRIPHNVLNAKYHEQEAGIIAEAGRRGAITVATNMAGRGTDIVLGGNVDFLTDKRLRDNGLDPVETPDEYEQAWHQELPKVKEEAGDEATEVIKAGGLYVLGTERHESRRIDNQLRGRSGRQGDPGESRFYLSLGDELMRRFNGAALESLLTRLNLPDDVPIEAKMVTRAIKSAQTQVEQQNFEVRKNVLKYDEVMNQQRKVIYAERRRILEGENLQQQVKDMLTDVITAYVDGATVEGYAEDWDLDALWTALKTLYPVGIKTDTLMRRDQDSDRDDLTRDELLQALLQDADQAYAAREAELEELAGEGAMRQLERNVLLNVIDRKWREHLYEMDYLKEGIGLRAMAQRDPLVEYQREGYDMFMAMLDGVKEESVGFLFNVSVEAVPAPQVEVAPVAEPEDLAEFATAAAAAAQEGGAGRKNAAAREEAPSRLRAKGIEDESPALTYSGPSEDGSAQVQRNGGGAAKTPAGVPAGRSRRERREAARRQGRGAKPPKSVKKR.

Residues glutamine 83, 101 to 105 (GEGKT), and aspartate 490 each bind ATP. Positions 864 to 950 (EGGAGRKNAA…AKPPKSVKKR (87 aa)) are disordered. Residues 873–888 (AAREEAPSRLRAKGIE) show a composition bias toward basic and acidic residues.

Belongs to the SecA family. In terms of assembly, monomer and homodimer. Part of the essential Sec protein translocation apparatus which comprises SecA, SecYEG and auxiliary proteins SecDF. Other proteins may also be involved.

The protein localises to the cell membrane. Its subcellular location is the cytoplasm. The enzyme catalyses ATP + H2O + cellular proteinSide 1 = ADP + phosphate + cellular proteinSide 2.. Part of the Sec protein translocase complex. Interacts with the SecYEG preprotein conducting channel. Has a central role in coupling the hydrolysis of ATP to the transfer of proteins into and across the cell membrane, serving as an ATP-driven molecular motor driving the stepwise translocation of polypeptide chains across the membrane. This chain is Protein translocase subunit SecA 1, found in Mycobacterium ulcerans (strain Agy99).